We begin with the raw amino-acid sequence, 320 residues long: Arginine/serine-rich protein 1 (320 aa).

Positions 1 to 22 (MKTEASPGRLHEDVKLIFDKKA) are enriched in basic and acidic residues. 2 disordered regions span residues 1 to 180 (MKTE…SRER) and 215 to 299 (LKEM…ADIV). Composition is skewed to low complexity over residues 24–48 (SGRS…SRGS) and 56–74 (TSSS…SNSR). Basic residues-rich tracts occupy residues 75 to 102 (SRSR…RARS), 114 to 158 (RRRH…RYRC), and 166 to 175 (RSPRPYRSRS). Phosphoserine is present on residues Ser135 and Ser137. A compositionally biased stretch (basic and acidic residues) spans 215 to 238 (LKEMEQQEERKRRSSSDEEERVRV). A compositionally biased stretch (polar residues) spans 271 to 293 (VFSNNNAIAKPSSSPTLSDSKVT).

Belongs to the RSRP family. Post-translationally, phosphorylated. Phosphorylation at Ser-135 and Ser-137 mediates the interaction with spliceosome proteins.

Its subcellular location is the nucleus. Its function is as follows. Probably acts as a spliceosomal factor that contributes to spliceosome assembly and regulates the isoform switching of proteins such as PARP6. This is Arginine/serine-rich protein 1 (rsrp1) from Danio rerio (Zebrafish).